The sequence spans 698 residues: Endogenous retrovirus group K member 21 Env polyprotein (698 aa).

The interval 1–25 (MHPSEMQRKAPPRRRRHRNRAPLTH) is disordered. Residues 1 to 88 (MHPSEMQRKA…ALMIVSMVVS (88 aa)) form the signal peptide. A compositionally biased stretch (basic residues) spans 10 to 20 (APPRRRRHRNR). The Extracellular portion of the chain corresponds to 89–631 (LPMPAGAAAA…NLNPVTWVKT (543 aa)). 7 N-linked (GlcNAc...) asparagine glycosylation sites follow: asparagine 99, asparagine 127, asparagine 152, asparagine 273, asparagine 354, asparagine 371, and asparagine 460. The interval 465-485 (FIFTLIAVIMGLIAVTAMAAV) is fusion peptide. N-linked (GlcNAc...) asparagine glycosylation is found at asparagine 506, asparagine 553, asparagine 565, and asparagine 584. Residues 632–652 (IGSTTIINLILILVCLFCLLL) form a helical membrane-spanning segment. At 653–698 (VCRCTQQLRRDSDHRERAMMTMVVLSKRKGGNVGKSKRDQIVTVSV) the chain is on the cytoplasmic side.

Belongs to the beta type-B retroviral envelope protein family. HERV class-II K(HML-2) env subfamily. As to quaternary structure, the surface (SU) and transmembrane (TM) proteins form a heterodimer. SU and TM are attached by noncovalent interactions or by a labile interchain disulfide bond. Post-translationally, specific enzymatic cleavages in vivo yield the mature SU and TM proteins.

It localises to the cell membrane. The protein localises to the virion. Functionally, retroviral envelope proteins mediate receptor recognition and membrane fusion during early infection. Endogenous envelope proteins may have kept, lost or modified their original function during evolution. This endogenous envelope protein has lost its original fusogenic properties. SU mediates receptor recognition. In terms of biological role, TM anchors the envelope heterodimer to the viral membrane through one transmembrane domain. The other hydrophobic domain, called fusion peptide, mediates fusion of the viral membrane with the target cell membrane. This chain is Endogenous retrovirus group K member 21 Env polyprotein (ERVK-21), found in Homo sapiens (Human).